The primary structure comprises 959 residues: Ribonucleoside-diphosphate reductase large subunit (959 aa).

Substrate-binding positions include Thr68, 83–84 (SC), and Gly112. Cys84 and Cys626 are joined by a disulfide. Asn270 serves as the catalytic Proton acceptor. Residues 378 to 508 (LPTLFGNSEH…IQLLLIGMGV (131 aa)) enclose the DOD-type homing endonuclease domain. Catalysis depends on Cys611, which acts as the Cysteine radical intermediate. The active-site Proton acceptor is Glu613. A substrate-binding site is contributed by 751–755 (PTATS).

It belongs to the ribonucleoside diphosphate reductase large chain family. In terms of assembly, heterotetramer composed of a homodimer of the large subunit (R1) and a homodimer of the small subunit (R2). Larger multisubunit protein complex are also active, composed of (R1)n(R2)n.

It catalyses the reaction a 2'-deoxyribonucleoside 5'-diphosphate + [thioredoxin]-disulfide + H2O = a ribonucleoside 5'-diphosphate + [thioredoxin]-dithiol. Its activity is regulated as follows. Under complex allosteric control mediated by deoxynucleoside triphosphates and ATP binding. The type of nucleotide bound at the specificity site determines substrate preference. It seems probable that ATP makes the enzyme reduce CDP and UDP, dGTP favors ADP reduction and dTTP favors GDP reduction. Functionally, ribonucleoside-diphosphate reductase holoenzyme provides the precursors necessary for viral DNA synthesis. Allows virus growth in non-dividing cells. Catalyzes the biosynthesis of deoxyribonucleotides from the corresponding ribonucleotides. The sequence is that of Ribonucleoside-diphosphate reductase large subunit from Acheta domesticus (House cricket).